The sequence spans 589 residues: Probable galacturonosyltransferase 6 (589 aa).

The Cytoplasmic segment spans residues 1 to 6 (MKQIRR). Residues 7–27 (WQRILILALLSISVFAPLIFV) form a helical; Signal-anchor for type II membrane protein membrane-spanning segment. At 28-589 (SNRLKSITPV…TYLQQCNLQA (562 aa)) the chain is on the lumenal side. 2 N-linked (GlcNAc...) asparagine glycosylation sites follow: asparagine 83 and asparagine 126. Residues 127–151 (KTDFKPPLSKGEKNTRVQPDRATDV) are disordered. Residues 136–151 (KGEKNTRVQPDRATDV) are compositionally biased toward basic and acidic residues. N-linked (GlcNAc...) asparagine glycans are attached at residues asparagine 317 and asparagine 454.

This sequence belongs to the glycosyltransferase 8 family. As to expression, expressed in roots, inflorescences, siliques, leaves and stems.

The protein localises to the golgi apparatus membrane. Its pathway is glycan metabolism; pectin biosynthesis. Its function is as follows. Probably involved in pectin biosynthesis in cell walls. This chain is Probable galacturonosyltransferase 6 (GAUT6), found in Arabidopsis thaliana (Mouse-ear cress).